The primary structure comprises 893 residues: Beta-adaptin-like protein C (893 aa).

Residues 593–621 (TEDEDYVEGSETGYPEASGNPVDGAASPS) are disordered.

Belongs to the adaptor complexes large subunit family. Adaptor protein complexes are heterotetramers composed of two large adaptins (beta-type subunit and alpha-type or delta-type or epsilon-type or gamma-type subunit), a medium adaptin (mu-type subunit) and a small adaptin (sigma-type subunit).

The protein localises to the golgi apparatus. Its subcellular location is the trans-Golgi network. It is found in the cytoplasmic vesicle. It localises to the clathrin-coated vesicle membrane. Functionally, subunit of clathrin-associated adaptor protein complex that plays a role in protein sorting in the late-Golgi/trans-Golgi network (TGN) and/or endosomes. The AP complexes mediate both the recruitment of clathrin to membranes and the recognition of sorting signals within the cytosolic tails of transmembrane cargo molecules. The chain is Beta-adaptin-like protein C (BETAC-AD) from Arabidopsis thaliana (Mouse-ear cress).